A 1358-amino-acid polypeptide reads, in one-letter code: DNA mismatch repair protein Msh6 (1358 aa).

The segment at Met-1 to Ser-87 is disordered. Residues Ser-14, Ser-38, and Ser-40 each carry the phosphoserine modification. Low complexity predominate over residues Ala-25–Ala-46. N6-acetyllysine is present on Lys-67. Positions Ala-76–Ser-87 are enriched in low complexity. Ser-91, Ser-137, Ser-200, Ser-219, and Ser-227 each carry phosphoserine. One can recognise a PWWP domain in the interval Pro-92–Ser-154. The disordered stretch occupies residues Asp-197 to Gly-360. 2 stretches are compositionally biased toward acidic residues: residues Glu-198 to Glu-209 and Ser-219 to Ala-231. Basic residues predominate over residues Arg-240–Arg-249. 4 positions are modified to phosphoserine: Ser-252, Ser-254, Ser-256, and Ser-261. Positions Val-263 to Gly-273 are enriched in basic and acidic residues. Thr-269 is modified (phosphothreonine). Phosphoserine is present on residues Ser-274, Ser-275, Ser-279, and Ser-280. Residues Leu-329–Val-351 are compositionally biased toward polar residues. Thr-487 bears the Phosphothreonine mark. Lys-503 is subject to N6-acetyllysine. A phosphoserine mark is found at Ser-827 and Ser-932. A Phosphothreonine modification is found at Thr-1007. ATP is bound at residue Gly-1132–Ser-1139.

Belongs to the DNA mismatch repair MutS family. Component of the DNA mismatch repair (MMR) complex composed at least of MSH2, MSH3, MSH6, PMS1 and MLH1. Heterodimer consisting of MSH2-MSH6 (MutS alpha). Forms a ternary complex with MutL alpha (MLH1-PMS1). Interacts with MCM9. Part of the BRCA1-associated genome surveillance complex (BASC), which contains BRCA1, MSH2, MSH6, MLH1, ATM, BLM, PMS2 and the RAD50-MRE11-NBS1 protein complex. This association could be a dynamic process changing throughout the cell cycle and within subnuclear domains. Post-translationally, phosphorylated by PRKCZ, which may prevent MutS alpha degradation by the ubiquitin-proteasome pathway.

It localises to the nucleus. It is found in the chromosome. Component of the post-replicative DNA mismatch repair system (MMR). Heterodimerizes with MSH2 to form MutS alpha, which binds to DNA mismatches thereby initiating DNA repair. When bound, MutS alpha bends the DNA helix and shields approximately 20 base pairs, and recognizes single base mismatches and dinucleotide insertion-deletion loops (IDL) in the DNA. After mismatch binding, forms a ternary complex with the MutL alpha heterodimer, which is thought to be responsible for directing the downstream MMR events, including strand discrimination, excision, and resynthesis. ATP binding and hydrolysis play a pivotal role in mismatch repair functions. The ATPase activity associated with MutS alpha regulates binding similar to a molecular switch: mismatched DNA provokes ADP--&gt;ATP exchange, resulting in a discernible conformational transition that converts MutS alpha into a sliding clamp capable of hydrolysis-independent diffusion along the DNA backbone. This transition is crucial for mismatch repair. MutS alpha may also play a role in DNA homologous recombination repair. Recruited on chromatin in G1 and early S phase via its PWWP domain that specifically binds trimethylated 'Lys-36' of histone H3 (H3K36me3): early recruitment to chromatin to be replicated allowing a quick identification of mismatch repair to initiate the DNA mismatch repair reaction. This chain is DNA mismatch repair protein Msh6, found in Mus musculus (Mouse).